Consider the following 241-residue polypeptide: Uridylate kinase (241 aa).

ATP is bound at residue 15–18 (KLSG). The interval 23–28 (GTEGFG) is involved in allosteric activation by GTP. G57 is a binding site for UMP. Residues G58 and R62 each coordinate ATP. UMP is bound by residues D77 and 138 to 145 (TGNPFFTT). T165, F171, and D174 together coordinate ATP.

Belongs to the UMP kinase family. As to quaternary structure, homohexamer.

Its subcellular location is the cytoplasm. The catalysed reaction is UMP + ATP = UDP + ADP. It participates in pyrimidine metabolism; CTP biosynthesis via de novo pathway; UDP from UMP (UMPK route): step 1/1. Allosterically activated by GTP. Inhibited by UTP. Its function is as follows. Catalyzes the reversible phosphorylation of UMP to UDP. The protein is Uridylate kinase of Escherichia coli O139:H28 (strain E24377A / ETEC).